Here is a 428-residue protein sequence, read N- to C-terminus: Histidine--tRNA ligase (428 aa).

It belongs to the class-II aminoacyl-tRNA synthetase family. Homodimer.

It is found in the cytoplasm. The enzyme catalyses tRNA(His) + L-histidine + ATP = L-histidyl-tRNA(His) + AMP + diphosphate + H(+). This Bordetella avium (strain 197N) protein is Histidine--tRNA ligase.